Here is a 91-residue protein sequence, read N- to C-terminus: Lipolysis-activating peptide 1-alpha chain (91 aa).

The N-terminal stretch at 1–21 is a signal peptide; sequence MNIKLFCFLSILISLTGLSLS. In terms of domain architecture, LCN-type CS-alpha/beta spans 23-87; that stretch reads DDGNYPIDAN…FFDAYKTYCK (65 aa). 3 disulfides stabilise this stretch: Cys-38–Cys-61, Cys-47–Cys-66, and Cys-51–Cys-68.

The protein belongs to the long (3 C-C) scorpion toxin superfamily. In terms of assembly, heterodimer of this alpha chain and a beta chain (AC D9U2A2). As to expression, expressed by the venom gland.

It is found in the secreted. The heterodimer LVP1 induces lipolysis in rat adipocytes. Induction of lipolysis by LVP1 appears to be mediated through the beta-2 adrenergic receptor pathway (ADRB2). The protein is Lipolysis-activating peptide 1-alpha chain of Lychas mucronatus (Chinese swimming scorpion).